The sequence spans 155 residues: Small ribosomal subunit protein uS7 (155 aa).

The protein belongs to the universal ribosomal protein uS7 family. As to quaternary structure, part of the 30S ribosomal subunit. Contacts proteins S9 and S11.

Functionally, one of the primary rRNA binding proteins, it binds directly to 16S rRNA where it nucleates assembly of the head domain of the 30S subunit. Is located at the subunit interface close to the decoding center, probably blocks exit of the E-site tRNA. The protein is Small ribosomal subunit protein uS7 of Chlorobium phaeovibrioides (strain DSM 265 / 1930) (Prosthecochloris vibrioformis (strain DSM 265)).